The sequence spans 499 residues: Circadian clock oscillator protein KaiC (499 aa).

KaiC domains follow at residues methionine 1–phenylalanine 243 and valine 257–alanine 499. The ATP site is built by glycine 45, threonine 46, glycine 47, lysine 48, threonine 49, serine 85, lysine 220, leucine 221, arginine 222, threonine 224, histidine 226, threonine 286, glycine 287, threonine 288, glycine 289, lysine 290, threonine 291, and leucine 292. Threonine 49 provides a ligand contact to Mg(2+). Threonine 291 lines the Mg(2+) pocket. Glutamate 314 contributes to the Mg(2+) binding site. Tryptophan 327 provides a ligand contact to ATP. At serine 427 the chain carries Phosphoserine; by autocatalysis. Threonine 428 carries the post-translational modification Phosphothreonine; by autocatalysis. Residues arginine 447, lysine 453, methionine 454, arginine 455, serine 457, histidine 459, and lysine 461 each coordinate ATP.

This sequence belongs to the KaiC family. In terms of assembly, homohexamer; hexamerization is dependent on ATP-binding. Component of the KaiBC complex. KaiC interacts with SasA, activating its autokinase function and leading to RpaA activation. Mg(2+) serves as cofactor. Post-translationally, phosphorylated on serine and threonine residues by autocatalysis. Has a 4 step phosphorylation cycle; the autokinase acts first on Thr-428, then Ser-427. When Ser-427 is modified KaiC switches to an autophosphatase mode, acting first on phospho-Thr-428 then phospho-Ser-427.

The catalysed reaction is L-seryl-[protein] + ATP = O-phospho-L-seryl-[protein] + ADP + H(+). It catalyses the reaction L-threonyl-[protein] + ATP = O-phospho-L-threonyl-[protein] + ADP + H(+). It carries out the reaction ATP + H2O = ADP + phosphate + H(+). Its function is as follows. Central component of the KaiBC oscillator complex, which constitutes the main circadian regulator in cyanobacteria. Its composition changes during the circadian cycle to control KaiC phosphorylation. Autophosphorylates and has a weak ATPase activity; ATPase activity defines the circadian period. This chain is Circadian clock oscillator protein KaiC, found in Prochlorococcus marinus (strain MIT 9313).